The chain runs to 545 residues: T-complex protein 1 subunit gamma (545 aa).

Position 1 is an N-acetylmethionine (M1). A disordered region spans residues 1–24 (MMGHRPVLVLSQNTKRESGRKVQS). S11 is subject to Phosphoserine. K15 participates in a covalent cross-link: Glycyl lysine isopeptide (Lys-Gly) (interchain with G-Cter in SUMO2). G42 is a binding site for ADP. G42 is an ATP binding site. D93 is a binding site for Mg(2+). ADP is bound by residues G94, T95, T96, S97, T162, and K163. Positions 94, 95, and 96 each coordinate ATP. S170 bears the Phosphoserine mark. K222 carries the post-translational modification N6-acetyllysine. 2 positions are modified to phosphoserine: S243 and S244. A Phosphotyrosine modification is found at Y247. Glycyl lysine isopeptide (Lys-Gly) (interchain with G-Cter in SUMO2) cross-links involve residues K248 and K249. Position 252 is a phosphoserine (S252). C366 and C372 form a disulfide bridge. K381 is covalently cross-linked (Glycyl lysine isopeptide (Lys-Gly) (interchain with G-Cter in SUMO2)). G411 is an ADP binding site. G411 is a binding site for ATP. 2 positions are modified to phosphothreonine: T430 and T459. ADP-binding residues include G482, E483, E497, and K502. G482 lines the ATP pocket. Residue E497 coordinates ATP. The tract at residues 526-545 (HKKKGDDQNRQTGAPDAGQE) is disordered.

The protein belongs to the TCP-1 chaperonin family. Component of the chaperonin-containing T-complex (TRiC), a hexadecamer composed of two identical back-to-back stacked rings enclosing a protein folding chamber. Each ring is made up of eight different subunits: TCP1/CCT1, CCT2, CCT3, CCT4, CCT5, CCT6A/CCT6, CCT7, CCT8. Interacts with PACRG. Interacts with DNAAF4. Interacts with DLEC1. The N-terminus is blocked.

It is found in the cytoplasm. The catalysed reaction is ATP + H2O = ADP + phosphate + H(+). Component of the chaperonin-containing T-complex (TRiC), a molecular chaperone complex that assists the folding of actin, tubulin and other proteins upon ATP hydrolysis. The TRiC complex mediates the folding of WRAP53/TCAB1, thereby regulating telomere maintenance. As part of the TRiC complex may play a role in the assembly of BBSome, a complex involved in ciliogenesis regulating transports vesicles to the cilia. In Mus musculus (Mouse), this protein is T-complex protein 1 subunit gamma (Cct3).